Here is a 510-residue protein sequence, read N- to C-terminus: NAD(P)H-quinone oxidoreductase subunit 2 A, chloroplastic (510 aa).

13 consecutive transmembrane segments (helical) span residues 26 to 46 (LFDG…ILLL), 57 to 77 (IPWF…ALLF), 99 to 119 (IFQF…VEYI), 124 to 144 (MAIT…MFLC), 149 to 169 (LITI…LSGY), 183 to 203 (YLLM…WLYG), 227 to 247 (PGIS…LSPA), 295 to 315 (WHPL…LIAI), 323 to 342 (MLAY…IIVG), 354 to 374 (YMLF…LFGL), 395 to 415 (ALSL…AGFF), 418 to 438 (LHLF…IGLF), and 484 to 504 (MIVC…IIAI).

The protein belongs to the complex I subunit 2 family. In terms of assembly, NDH is composed of at least 16 different subunits, 5 of which are encoded in the nucleus.

The protein localises to the plastid. Its subcellular location is the chloroplast thylakoid membrane. It catalyses the reaction a plastoquinone + NADH + (n+1) H(+)(in) = a plastoquinol + NAD(+) + n H(+)(out). It carries out the reaction a plastoquinone + NADPH + (n+1) H(+)(in) = a plastoquinol + NADP(+) + n H(+)(out). NDH shuttles electrons from NAD(P)H:plastoquinone, via FMN and iron-sulfur (Fe-S) centers, to quinones in the photosynthetic chain and possibly in a chloroplast respiratory chain. The immediate electron acceptor for the enzyme in this species is believed to be plastoquinone. Couples the redox reaction to proton translocation, and thus conserves the redox energy in a proton gradient. The sequence is that of NAD(P)H-quinone oxidoreductase subunit 2 A, chloroplastic from Oenothera biennis (German evening primrose).